The following is a 189-amino-acid chain: Probable nicotinate-nucleotide adenylyltransferase (189 aa).

The protein belongs to the NadD family.

It catalyses the reaction nicotinate beta-D-ribonucleotide + ATP + H(+) = deamido-NAD(+) + diphosphate. Its pathway is cofactor biosynthesis; NAD(+) biosynthesis; deamido-NAD(+) from nicotinate D-ribonucleotide: step 1/1. In terms of biological role, catalyzes the reversible adenylation of nicotinate mononucleotide (NaMN) to nicotinic acid adenine dinucleotide (NaAD). This chain is Probable nicotinate-nucleotide adenylyltransferase, found in Bacillus cereus (strain B4264).